Consider the following 726-residue polypeptide: Dipeptidyl-peptidase 5 (726 aa).

Residues 1 to 19 (MAAAKWLIASLAFASSGLA) form the signal peptide. Residues Asn-96 and Asn-252 are each glycosylated (N-linked (GlcNAc...) asparagine). The interval 269–291 (AEPINKRNGPRTPQGIEGASSSP) is disordered. Ser-558 acts as the Charge relay system in catalysis. N-linked (GlcNAc...) asparagine glycosylation is present at Asn-605. Active-site charge relay system residues include Asp-641 and His-673. The N-linked (GlcNAc...) asparagine glycan is linked to Asn-699.

This sequence belongs to the peptidase S9C family.

The protein localises to the secreted. In terms of biological role, extracellular dipeptidyl-peptidase which removes N-terminal dipeptides sequentially from polypeptides having unsubstituted N-termini. Contributes to pathogenicity. This Trichophyton tonsurans (Scalp ringworm fungus) protein is Dipeptidyl-peptidase 5 (DPP5).